A 177-amino-acid chain; its full sequence is ATP-dependent protease subunit HslV (177 aa).

Residue Thr-6 is part of the active site. 3 residues coordinate Na(+): Ser-161, Cys-164, and Thr-167.

This sequence belongs to the peptidase T1B family. HslV subfamily. A double ring-shaped homohexamer of HslV is capped on each side by a ring-shaped HslU homohexamer. The assembly of the HslU/HslV complex is dependent on binding of ATP.

The protein resides in the cytoplasm. The catalysed reaction is ATP-dependent cleavage of peptide bonds with broad specificity.. With respect to regulation, allosterically activated by HslU binding. In terms of biological role, protease subunit of a proteasome-like degradation complex believed to be a general protein degrading machinery. This is ATP-dependent protease subunit HslV from Thermodesulfovibrio yellowstonii (strain ATCC 51303 / DSM 11347 / YP87).